A 1193-amino-acid polypeptide reads, in one-letter code: Structural maintenance of chromosomes protein 3 homolog (1193 aa).

Position 31–38 (31–38 (GFNGSGKS)) interacts with ATP. N6-acetyllysine is present on K101. Coiled-coil stretches lie at residues 179 to 286 (SKKV…LNKT) and 332 to 483 (ILRV…EIIK). Residues 505–631 (ENILGFLIDN…VKSLESCENY (127 aa)) form the SMC hinge domain. The stretch at 665 to 993 (TVYNKLKELK…SHKNIKDMIQ (329 aa)) forms a coiled coil.

This sequence belongs to the SMC family. SMC3 subfamily. Component of the cohesin complex. In terms of processing, acetylation at Lys-101 by ESCO1 is important for genome stability and S phase sister chromatid cohesion.

Its subcellular location is the nucleus. Central component of cohesin, a complex required for chromosome cohesion during the cell cycle. The cohesin complex may form a large proteinaceous ring within which sister chromatids can be trapped. At anaphase, the complex is cleaved and dissociates from chromatin, allowing sister chromatids to segregate. Cohesion is coupled to DNA replication and is involved in DNA repair. The cohesin complex also plays an important role in spindle pole assembly during mitosis and in chromosomes movement. The chain is Structural maintenance of chromosomes protein 3 homolog from Plasmodium falciparum (isolate 3D7).